The primary structure comprises 356 residues: Glutamine synthetase N-1 (356 aa).

Residues 19-99 (VIAEYIWVGG…VMCDAYTPAG (81 aa)) form the GS beta-grasp domain. Residues 106 to 356 (KRHNAAKIFS…IAETTLLWKP (251 aa)) form the GS catalytic domain.

The protein belongs to the glutamine synthetase family. In terms of assembly, homooctamer. This is a nodule isozyme.

The protein resides in the cytoplasm. The enzyme catalyses L-glutamate + NH4(+) + ATP = L-glutamine + ADP + phosphate + H(+). The protein is Glutamine synthetase N-1 (Gln-gamma) of Phaseolus vulgaris (Kidney bean).